The chain runs to 258 residues: Imidazole glycerol phosphate synthase subunit HisF (258 aa).

Catalysis depends on residues aspartate 11 and aspartate 130.

Belongs to the HisA/HisF family. As to quaternary structure, heterodimer of HisH and HisF.

The protein resides in the cytoplasm. The catalysed reaction is 5-[(5-phospho-1-deoxy-D-ribulos-1-ylimino)methylamino]-1-(5-phospho-beta-D-ribosyl)imidazole-4-carboxamide + L-glutamine = D-erythro-1-(imidazol-4-yl)glycerol 3-phosphate + 5-amino-1-(5-phospho-beta-D-ribosyl)imidazole-4-carboxamide + L-glutamate + H(+). The protein operates within amino-acid biosynthesis; L-histidine biosynthesis; L-histidine from 5-phospho-alpha-D-ribose 1-diphosphate: step 5/9. IGPS catalyzes the conversion of PRFAR and glutamine to IGP, AICAR and glutamate. The HisF subunit catalyzes the cyclization activity that produces IGP and AICAR from PRFAR using the ammonia provided by the HisH subunit. The polypeptide is Imidazole glycerol phosphate synthase subunit HisF (Shigella dysenteriae serotype 1 (strain Sd197)).